The sequence spans 32 residues: MAVTIAVDFCACVCNIDLWLPKAMVFKLALAW.

This is an uncharacterized protein from Haloarcula hispanica (His1V).